The primary structure comprises 210 residues: MNRKLIQNLAETLCRQVKHFNKTETECLIRLFNSLLGEQAERKTTIGVDRAKFRNILHHTFGMTDDMMTDRVCRVIDKDNDGYLSVKEWVEALSVFLRGTLDEKMKYCFEVYDLNGDGYISREEMFQMLKDSLIRQPTEEDPDEGIKDIVEIALKKMDYDHDGRVSYADFEKTVMDENLLLEAFGNCLPDAKSVLAFEQQAFQKHEHCKE.

3 EF-hand domains span residues 64–99 (TDDMMTDRVCRVIDKDNDGYLSVKEWVEALSVFLRG), 100–135 (TLDEKMKYCFEVYDLNGDGYISREEMFQMLKDSLIR), and 145–180 (GIKDIVEIALKKMDYDHDGRVSYADFEKTVMDENLL). The Ca(2+) site is built by Asp77, Asp79, Asp81, Tyr83, Glu88, Asp113, Asn115, Asp117, Tyr119, Glu124, Asp158, Asp160, Asp162, Arg164, and Asp169.

As to quaternary structure, component of the outer dynein arm-docking complex along with ODAD1, ODAD2, ODAD3 and ODAD4.

It localises to the cytoplasm. It is found in the cytoskeleton. Its subcellular location is the cilium axoneme. The protein resides in the cell projection. The protein localises to the cilium. It localises to the flagellum. Component of the outer dynein arm-docking complex (ODA-DC) that mediates outer dynein arms (ODA) binding onto the doublet microtubule. Seems to regulate the assembly of both ODAs and their axonemal docking complex onto ciliary microtubules. Regulates ciliary and flagellar motility and is required for cilia-driven determination of body laterality. Functionally, regulates ciliary motility and is required for cilia-driven determination of body laterality. In Danio rerio (Zebrafish), this protein is Calaxin (clxn).